A 252-amino-acid chain; its full sequence is 5'-nucleotidase SurE (252 aa).

A divalent metal cation is bound by residues aspartate 8, aspartate 9, serine 40, and asparagine 93.

The protein belongs to the SurE nucleotidase family. The cofactor is a divalent metal cation.

It localises to the cytoplasm. The enzyme catalyses a ribonucleoside 5'-phosphate + H2O = a ribonucleoside + phosphate. Nucleotidase that shows phosphatase activity on nucleoside 5'-monophosphates. The protein is 5'-nucleotidase SurE of Erythrobacter litoralis (strain HTCC2594).